The sequence spans 511 residues: GMP synthase [glutamine-hydrolyzing] (511 aa).

The Glutamine amidotransferase type-1 domain occupies 3 to 198 (SVLVLDFGSQ…LLNIAAITPD (196 aa)). The active-site Nucleophile is the Cys-80. Active-site residues include His-172 and Glu-174. The GMPS ATP-PPase domain occupies 199–386 (WSSKSFIEHQ…LGIPEDILMR (188 aa)). 226-232 (SGGVDST) lines the ATP pocket.

In terms of assembly, homodimer.

It carries out the reaction XMP + L-glutamine + ATP + H2O = GMP + L-glutamate + AMP + diphosphate + 2 H(+). The protein operates within purine metabolism; GMP biosynthesis; GMP from XMP (L-Gln route): step 1/1. Catalyzes the synthesis of GMP from XMP. In Chlorobium chlorochromatii (strain CaD3), this protein is GMP synthase [glutamine-hydrolyzing].